The following is a 313-amino-acid chain: Olfactory receptor 1J2 (313 aa).

Topologically, residues Met1–Ala25 are extracellular. An N-linked (GlcNAc...) asparagine glycan is attached at Asn5. The helical transmembrane segment at Val26–Ile49 threads the bilayer. Residues Gln50–Thr57 lie on the Cytoplasmic side of the membrane. The chain crosses the membrane as a helical span at residues Pro58 to Pro79. The Extracellular portion of the chain corresponds to Lys80 to Gln100. A disulfide bridge connects residues Cys97 and Cys189. A helical transmembrane segment spans residues Met101–Tyr120. At Asp121–Glu139 the chain is on the cytoplasmic side. Residues Leu140 to Ser158 traverse the membrane as a helical segment. Topologically, residues His159–Glu196 are extracellular. Residues Leu197–Gly219 traverse the membrane as a helical segment. Residues Tyr220–Lys236 are Cytoplasmic-facing. The chain crosses the membrane as a helical span at residues Ala237 to Tyr259. Residues Leu260–Val272 are Extracellular-facing. Residues Ile273–Leu292 traverse the membrane as a helical segment. The Cytoplasmic portion of the chain corresponds to Arg293–Trp313.

The protein belongs to the G-protein coupled receptor 1 family.

It localises to the cell membrane. Odorant receptor. In Homo sapiens (Human), this protein is Olfactory receptor 1J2 (OR1J2).